The sequence spans 491 residues: Serine/threonine-protein kinase 33 (491 aa).

The interval 51–89 (FASQERKKERNTSRESSLKDLSIRTSNVERKPQAQWSRS) is disordered. The segment covering 54–82 (QERKKERNTSRESSLKDLSIRTSNVERKP) has biased composition (basic and acidic residues). A Protein kinase domain is found at 111–377 (YTFGRILGQG…AKELLDNQWL (267 aa)). ATP is bound by residues 117–125 (LGQGSFGMV) and Lys140. Catalysis depends on Asp233, which acts as the Proton acceptor. The interval 398–491 (KNNPESDEET…TTLFRGKKRL (94 aa)) is disordered. Acidic residues predominate over residues 402–414 (ESDEETNTDEETE). Residue Ser403 is modified to Phosphoserine. Over residues 415–431 (QSAVYSPSANTAKQPTN) the composition is skewed to polar residues. Residues 445-457 (SSNSSSSKLLSAE) are compositionally biased toward low complexity. The span at 475–484 (AKTTLKSTTL) shows a compositional bias: polar residues.

This sequence belongs to the protein kinase superfamily. CAMK Ser/Thr protein kinase family. CaMK subfamily. Homodimer. In terms of processing, autophosphorylated. In terms of tissue distribution, highly expressed in testis, particularly in cells from the spermatogenic epithelia. Present in meiotic and post meiotic sperm cells. Significant expression is detected in lung epithelia, alveolar macrophages, horizontal cells in the retina and in embryonic organs such as heart, brain and spinal cord. Also expressed in pituitary gland, kidney, pancreas, trachea and thyroid gland.

It is found in the cytoplasm. Its subcellular location is the cytoskeleton. It localises to the perinuclear region. It carries out the reaction L-seryl-[protein] + ATP = O-phospho-L-seryl-[protein] + ADP + H(+). The enzyme catalyses L-threonyl-[protein] + ATP = O-phospho-L-threonyl-[protein] + ADP + H(+). With respect to regulation, specifically inhibited by CDD-2807 ((3-([1,1'-Biphenyl]-2-ylethynyl)-1H-indazol-5-yl)(2,6-diazaspiro[3.5]nonan-2-yl)methanone). CDD-2807 is a potential male contraceptive drug: it is not toxic, efficiently crosses the blood-testis barrier and induces a reversible contraceptive effect in male mice. Serine/threonine protein kinase required for spermatid differentiation and male fertility. Promotes sperm flagella assembly during spermatogenesis by mediating phosphorylation of fibrous sheath proteins AKAP3 and AKAP4. Also phosphorylates vimentin/VIM, thereby regulating the dynamic behavior of the intermediate filament cytoskeleton. In Mus musculus (Mouse), this protein is Serine/threonine-protein kinase 33.